A 445-amino-acid polypeptide reads, in one-letter code: Eukaryotic translation initiation factor 3 subunit E (445 aa).

Residues 230 to 403 (FFNHVKGRDL…GHVVMGAQPL (174 aa)) form the PCI domain.

Belongs to the eIF-3 subunit E family. As to quaternary structure, component of the eukaryotic translation initiation factor 3 (eIF-3) complex.

It is found in the cytoplasm. Functionally, component of the eukaryotic translation initiation factor 3 (eIF-3) complex, which is involved in protein synthesis of a specialized repertoire of mRNAs and, together with other initiation factors, stimulates binding of mRNA and methionyl-tRNAi to the 40S ribosome. The eIF-3 complex specifically targets and initiates translation of a subset of mRNAs involved in cell proliferation. This chain is Eukaryotic translation initiation factor 3 subunit E (eIF3-S6), found in Bombyx mori (Silk moth).